The following is a 175-amino-acid chain: ATP synthase subunit delta (175 aa).

Belongs to the ATPase delta chain family. As to quaternary structure, F-type ATPases have 2 components, F(1) - the catalytic core - and F(0) - the membrane proton channel. F(1) has five subunits: alpha(3), beta(3), gamma(1), delta(1), epsilon(1). F(0) has three main subunits: a(1), b(2) and c(10-14). The alpha and beta chains form an alternating ring which encloses part of the gamma chain. F(1) is attached to F(0) by a central stalk formed by the gamma and epsilon chains, while a peripheral stalk is formed by the delta and b chains.

It localises to the cell inner membrane. In terms of biological role, f(1)F(0) ATP synthase produces ATP from ADP in the presence of a proton or sodium gradient. F-type ATPases consist of two structural domains, F(1) containing the extramembraneous catalytic core and F(0) containing the membrane proton channel, linked together by a central stalk and a peripheral stalk. During catalysis, ATP synthesis in the catalytic domain of F(1) is coupled via a rotary mechanism of the central stalk subunits to proton translocation. Functionally, this protein is part of the stalk that links CF(0) to CF(1). It either transmits conformational changes from CF(0) to CF(1) or is implicated in proton conduction. This Xanthomonas campestris pv. campestris (strain 8004) protein is ATP synthase subunit delta.